The chain runs to 791 residues: Nuclear cap-binding protein subunit 1 (791 aa).

The segment covering 1 to 14 has biased composition (basic and acidic residues); that stretch reads MSRRRHSDENDGGP. The disordered stretch occupies residues 1 to 24; it reads MSRRRHSDENDGGPHHKRRKTSEP. Residues 28 to 240 form the MIF4G domain; it reads EDRLESLICR…CLWAQIQKLK (213 aa). Residues 641 to 714 adopt a coiled-coil conformation; the sequence is LHSTIRKMNK…SEQKNLFLVI (74 aa). A disordered region spans residues 668–687; the sequence is KQHKHRDSDDNDEDSGRKDG.

Belongs to the NCBP1 family. In terms of assembly, component of the nuclear cap-binding complex (CBC), a heterodimer composed of ncbp1/cbp80 and ncbp2/cbp20 that interacts with m7GpppG-capped RNA. Component of an alternative nuclear cap-binding complex (CBC) composed of ncbp1/cbp80 and ncbp3.

It localises to the nucleus. It is found in the cytoplasm. In terms of biological role, component of the cap-binding complex (CBC), which binds cotranscriptionally to the 5'-cap of pre-mRNAs and is involved in various processes such as pre-mRNA splicing, translation regulation, nonsense-mediated mRNA decay, RNA-mediated gene silencing (RNAi) by microRNAs (miRNAs) and mRNA export. The CBC complex is involved in mRNA export from the nucleus, leading to the recruitment of the mRNA export machinery to the 5'-end of mRNA and to mRNA export in a 5' to 3' direction through the nuclear pore. The CBC complex is also involved in mediating U snRNA and intronless mRNAs export from the nucleus. The CBC complex is essential for a pioneer round of mRNA translation, before steady state translation when the CBC complex is replaced by cytoplasmic cap-binding protein eIF4E. The pioneer round of mRNA translation mediated by the CBC complex plays a central role in nonsense-mediated mRNA decay (NMD), NMD only taking place in mRNAs bound to the CBC complex, but not on eIF4E-bound mRNAs. The CBC complex enhances NMD in mRNAs containing at least one exon-junction complex (EJC), promoting the interaction between UPF1 and UPF2. The CBC complex is also involved in 'failsafe' NMD, which is independent of the EJC complex, while it does not participate in Staufen-mediated mRNA decay (SMD). During cell proliferation, the CBC complex is also involved in microRNAs (miRNAs) biogenesis via its interaction with SRRT/ARS2 and is required for miRNA-mediated RNA interference. The CBC complex also acts as a negative regulator of parn, thereby acting as an inhibitor of mRNA deadenylation. In the CBC complex, ncbp1/cbp80 does not bind directly capped RNAs (m7GpppG-capped RNA) but is required to stabilize the movement of the N-terminal loop of ncbp2/cbp20 and lock the CBC into a high affinity cap-binding state with the cap structure. Associates with NCBP3 to form an alternative cap-binding complex (CBC) which plays a key role in mRNA export. The conventional CBC with NCBP2 binds both small nuclear RNA (snRNA) and messenger (mRNA) and is involved in their export from the nucleus whereas the alternative CBC with NCBP3 does not bind snRNA and associates only with mRNA thereby playing a role only in mRNA export. The chain is Nuclear cap-binding protein subunit 1 (ncbp1) from Xenopus tropicalis (Western clawed frog).